The primary structure comprises 391 residues: F-box/kelch-repeat protein At3g16740 (391 aa).

Positions 1-47 (MVQISDLPRDLTEEVLSRIPVTSMRAVRFTCKKWNTLSKDRSFTKKH) constitute an F-box domain. Kelch repeat units lie at residues 104–154 (KIFH…YEEK) and 163–215 (ILRF…LKGN).

Part of a SCF (ASK-cullin-F-box) protein ligase complex. Interacts with ASK11.

It localises to the nucleus. It participates in protein modification; protein ubiquitination. In terms of biological role, component of SCF(ASK-cullin-F-box) E3 ubiquitin ligase complexes, which may mediate the ubiquitination and subsequent proteasomal degradation of target proteins. The sequence is that of F-box/kelch-repeat protein At3g16740 from Arabidopsis thaliana (Mouse-ear cress).